Reading from the N-terminus, the 349-residue chain is Selenide, water dikinase (349 aa).

Residue C17 is part of the active site. ATP is bound by residues K20 and 48–50 (YFD). Residue D51 participates in Mg(2+) binding. Residues D68, D91, and 139-141 (GHS) each bind ATP. D91 is a Mg(2+) binding site. D229 is a Mg(2+) binding site.

This sequence belongs to the selenophosphate synthase 1 family. Class I subfamily. In terms of assembly, homodimer. Mg(2+) is required as a cofactor.

It carries out the reaction hydrogenselenide + ATP + H2O = selenophosphate + AMP + phosphate + 2 H(+). Functionally, synthesizes selenophosphate from selenide and ATP. This chain is Selenide, water dikinase, found in Nitrosomonas eutropha (strain DSM 101675 / C91 / Nm57).